Consider the following 403-residue polypeptide: Acetate kinase (403 aa).

Asn-8 contributes to the Mg(2+) binding site. Lys-15 contributes to the ATP binding site. Arg-90 serves as a coordination point for substrate. Asp-147 serves as the catalytic Proton donor/acceptor. Residues 207–211, 282–284, and 330–334 each bind ATP; these read HLGSG, DLR, and GVGEN. Position 384 (Glu-384) interacts with Mg(2+).

It belongs to the acetokinase family. In terms of assembly, homodimer. It depends on Mg(2+) as a cofactor. The cofactor is Mn(2+).

Its subcellular location is the cytoplasm. It catalyses the reaction acetate + ATP = acetyl phosphate + ADP. It participates in metabolic intermediate biosynthesis; acetyl-CoA biosynthesis; acetyl-CoA from acetate: step 1/2. Functionally, catalyzes the formation of acetyl phosphate from acetate and ATP. Can also catalyze the reverse reaction. The polypeptide is Acetate kinase (Exiguobacterium sp. (strain ATCC BAA-1283 / AT1b)).